A 141-amino-acid chain; its full sequence is Hemoglobin subunit alpha (141 aa).

Residues 1–141 (VLSSDDKCNV…VSSVLTSKYR (141 aa)) form the Globin domain. His-58 is a binding site for O2. Residue His-87 participates in heme b binding.

The protein belongs to the globin family. In terms of assembly, heterotetramer of two alpha chains and two beta chains. Red blood cells.

Its function is as follows. Involved in oxygen transport from the lung to the various peripheral tissues. The polypeptide is Hemoglobin subunit alpha (HBA) (Crocodylus niloticus (Nile crocodile)).